Reading from the N-terminus, the 469-residue chain is Cyclin-dependent kinase 14 (469 aa).

Phosphoserine occurs at positions 24, 78, and 95. The disordered stretch occupies residues 103–133; the sequence is FKTSSTGKESPKVRRHSSPSSPTSPKFGKAD. Position 134 is a phosphoserine (Ser-134). The Protein kinase domain occupies 135–419; it reads YEKLEKLGEG…AQAALSHEYF (285 aa). Residues 141 to 149 and Lys-164 each bind ATP; that span reads LGEGSYATV. Asp-256 functions as the Proton acceptor in the catalytic mechanism. The disordered stretch occupies residues 449–469; the sequence is ESMRAFGKNNSYGKSLSNSKH. The span at 456–469 shows a compositional bias: polar residues; it reads KNNSYGKSLSNSKH.

It belongs to the protein kinase superfamily. CMGC Ser/Thr protein kinase family. CDC2/CDKX subfamily. As to quaternary structure, found in a complex with LRP6, CCNY and CAPRIN2 during G2/M stage; CAPRIN2 functions as a scaffold for the complex by binding to CCNY via its N terminus and to CDK14 via its C terminus. Interacts with CCNY; CCNY mediates its recruitment to the plasma membrane and promotes phosphorylation of LRP6. Interacts with CCDN3 and CDKN1A. Interacts with SEPT8. Interacts with 14-3-3 proteina YWHAB, YWHAE, YWHAH and YWHAQ. Highly expressed in brain, pancreas, kidney, heart, testis and ovary. Also detected at lower levels in other tissues except in spleen and thymus where expression is barely detected.

The protein resides in the cell membrane. Its subcellular location is the cytoplasm. It localises to the nucleus. It carries out the reaction L-seryl-[protein] + ATP = O-phospho-L-seryl-[protein] + ADP + H(+). It catalyses the reaction L-threonyl-[protein] + ATP = O-phospho-L-threonyl-[protein] + ADP + H(+). Its activity is regulated as follows. Serine/threonine-protein kinase activity is promoted by associated cyclins CCDN3 and CCNY and repressed by CDKN1A. Functionally, serine/threonine-protein kinase involved in the control of the eukaryotic cell cycle, whose activity is controlled by an associated cyclin. Acts as a cell-cycle regulator of Wnt signaling pathway during G2/M phase by mediating the phosphorylation of LRP6 at 'Ser-1490', leading to the activation of the Wnt signaling pathway. Acts as a regulator of cell cycle progression and cell proliferation via its interaction with CCDN3. Phosphorylates RB1 in vitro, however the relevance of such result remains to be confirmed in vivo. May also play a role in meiosis, neuron differentiation and may indirectly act as a negative regulator of insulin-responsive glucose transport. The protein is Cyclin-dependent kinase 14 (CDK14) of Homo sapiens (Human).